The following is a 78-amino-acid chain: Sec-independent protein translocase protein TatA (78 aa).

Residues M1 to G21 traverse the membrane as a helical segment. A disordered region spans residues K40–V78. A compositionally biased stretch (basic and acidic residues) spans E46–V78.

Belongs to the TatA/E family. In terms of assembly, the Tat system comprises two distinct complexes: a TatABC complex, containing multiple copies of TatA, TatB and TatC subunits, and a separate TatA complex, containing only TatA subunits. Substrates initially bind to the TatABC complex, which probably triggers association of the separate TatA complex to form the active translocon.

The protein resides in the cell inner membrane. Part of the twin-arginine translocation (Tat) system that transports large folded proteins containing a characteristic twin-arginine motif in their signal peptide across membranes. TatA could form the protein-conducting channel of the Tat system. The sequence is that of Sec-independent protein translocase protein TatA from Shewanella sediminis (strain HAW-EB3).